Consider the following 381-residue polypeptide: Homoserine O-acetyltransferase (381 aa).

One can recognise an AB hydrolase-1 domain in the interval 47 to 359 (NAILICHALT…DKGHDAFLLD (313 aa)). Serine 153 (nucleophile) is an active-site residue. Arginine 223 provides a ligand contact to substrate. Residues aspartate 320 and histidine 353 contribute to the active site. Aspartate 354 lines the substrate pocket.

This sequence belongs to the AB hydrolase superfamily. MetX family. Homodimer.

It is found in the cytoplasm. The enzyme catalyses L-homoserine + acetyl-CoA = O-acetyl-L-homoserine + CoA. Its pathway is amino-acid biosynthesis; L-methionine biosynthesis via de novo pathway; O-acetyl-L-homoserine from L-homoserine: step 1/1. Functionally, transfers an acetyl group from acetyl-CoA to L-homoserine, forming acetyl-L-homoserine. The protein is Homoserine O-acetyltransferase of Acidiphilium cryptum (strain JF-5).